We begin with the raw amino-acid sequence, 77 residues long: Putative sulfur carrier protein YedF (77 aa).

Cys17 (cysteine persulfide intermediate) is an active-site residue.

This sequence belongs to the sulfur carrier protein TusA family.

The polypeptide is Putative sulfur carrier protein YedF (yedF) (Escherichia coli O157:H7).